We begin with the raw amino-acid sequence, 367 residues long: (E)-2-epi-beta-caryophyllene synthase (367 aa).

Mg(2+) is bound by residues Asp-93, Asn-234, and Ser-238. Positions 93–97 (DDIAE) match the DDXXE motif motif.

This sequence belongs to the terpene synthase family. The cofactor is Mg(2+). Mn(2+) serves as cofactor.

The enzyme catalyses (2E,6E)-farnesyl diphosphate = (E)-2-epi-beta-caryophyllene + diphosphate. The protein operates within secondary metabolite biosynthesis; terpenoid biosynthesis. Its function is as follows. Sesquiterpene synthase converting farnesyl diphosphate to (E)-2-epi-beta-caryophyllene as the major product, and to two other unidentified sesquiterpenes. Has no diterpene synthase activity. The protein is (E)-2-epi-beta-caryophyllene synthase of Selaginella moellendorffii (Spikemoss).